The primary structure comprises 151 residues: Ribosomal RNA large subunit methyltransferase H (151 aa).

S-adenosyl-L-methionine-binding positions include leucine 73, glycine 100, and 119–124; that span reads LSKMTM.

The protein belongs to the RNA methyltransferase RlmH family. As to quaternary structure, homodimer.

The protein resides in the cytoplasm. The enzyme catalyses pseudouridine(1915) in 23S rRNA + S-adenosyl-L-methionine = N(3)-methylpseudouridine(1915) in 23S rRNA + S-adenosyl-L-homocysteine + H(+). In terms of biological role, specifically methylates the pseudouridine at position 1915 (m3Psi1915) in 23S rRNA. This Campylobacter concisus (strain 13826) protein is Ribosomal RNA large subunit methyltransferase H.